Consider the following 90-residue polypeptide: Protein LIM3 (90 aa).

A signal peptide spans Met1–Gln26. Intrachain disulfides connect Cys28–Cys65, Cys38–Cys54, Cys55–Cys80, and Cys67–Cys87.

The protein belongs to the A9/FIL1 family.

The protein localises to the secreted. The polypeptide is Protein LIM3 (LIM3) (Lilium longiflorum (Trumpet lily)).